The primary structure comprises 124 residues: Large ribosomal subunit protein bL19 (124 aa).

It belongs to the bacterial ribosomal protein bL19 family.

Its function is as follows. This protein is located at the 30S-50S ribosomal subunit interface and may play a role in the structure and function of the aminoacyl-tRNA binding site. This chain is Large ribosomal subunit protein bL19, found in Acidiphilium cryptum (strain JF-5).